We begin with the raw amino-acid sequence, 115 residues long: Probable 4-amino-4-deoxy-L-arabinose-phosphoundecaprenol flippase subunit ArnE (115 aa).

A run of 4 helical transmembrane segments spans residues 1–21 (MIVG…GQLC), 43–63 (WLAL…NVLQ), 65–85 (LPLS…TLAA), and 93–113 (TTAR…LMSI). The 70-residue stretch at 44 to 113 (LALAVLLLGL…IMLGILLMSI (70 aa)) folds into the EamA domain.

This sequence belongs to the ArnE family. Heterodimer of ArnE and ArnF.

The protein resides in the cell inner membrane. Its pathway is bacterial outer membrane biogenesis; lipopolysaccharide biosynthesis. Functionally, translocates 4-amino-4-deoxy-L-arabinose-phosphoundecaprenol (alpha-L-Ara4N-phosphoundecaprenol) from the cytoplasmic to the periplasmic side of the inner membrane. This is Probable 4-amino-4-deoxy-L-arabinose-phosphoundecaprenol flippase subunit ArnE from Serratia proteamaculans (strain 568).